Reading from the N-terminus, the 190-residue chain is E3 ubiquitin-protein ligase RNF4 (190 aa).

The interval 1 to 16 (MSTRKRRGGAINSRQA) is required for ubiquitination activity. The segment at 1-29 (MSTRKRRGGAINSRQAQKRTREATSTPEI) is disordered. The segment at 4–61 (RKRRGGAINSRQAQKRTREATSTPEISLEAEPIELVETAGDEIVDLTCESLEPVVVDL) is mediates interaction with TRPS1. 4 consecutive short sequence motifs (SUMO interaction motif) follow at residues 36–39 (IELV), 46–49 (IVDL), 57–59 (VVV), and 67–70 (VVIV). Phosphoserine is present on residues Ser94 and Ser95. The Zn(2+) site is built by Cys132, Cys135, Cys154, His156, Cys159, Cys162, Cys173, and Cys176. An RING-type zinc finger spans residues 132–177 (CPICMDGYSEIVQNGRLIVSTECGHVFCSQCLRDSLKNANTCPTCR).

Homodimer (via RING-type zinc finger domain). Interacts with GSC2. Interacts with AR/the androgen receptor and TBP. Interacts with TCF20. Interacts with PATZ1. Interacts with TRPS1; negatively regulates TRPS1 transcriptional repressor activity. Interacts with PML (isoform PML-1, isoform PML-2, isoform PML-3, isoform PML-4, isoform PML-5 and isoform PML-6). Interacts with PRDM1/Blimp-1. Post-translationally, sumoylated; conjugated by one or two SUMO1 moieties. Autoubiquitinated. Widely expressed at low levels in many tissues; highly expressed in testis.

The protein resides in the cytoplasm. It localises to the nucleus. Its subcellular location is the PML body. The enzyme catalyses S-ubiquitinyl-[E2 ubiquitin-conjugating enzyme]-L-cysteine + [acceptor protein]-L-lysine = [E2 ubiquitin-conjugating enzyme]-L-cysteine + N(6)-ubiquitinyl-[acceptor protein]-L-lysine.. The protein operates within protein modification; protein ubiquitination. Functionally, E3 ubiquitin-protein ligase which binds polysumoylated chains covalently attached to proteins and mediates 'Lys-6'-, 'Lys-11'-, 'Lys-48'- and 'Lys-63'-linked polyubiquitination of those substrates and their subsequent targeting to the proteasome for degradation. Regulates the degradation of several proteins including PML and the transcriptional activator PEA3. Involved in chromosome alignment and spindle assembly, it regulates the kinetochore CENPH-CENPI-CENPK complex by targeting polysumoylated CENPI to proteasomal degradation. Regulates the cellular responses to hypoxia and heat shock through degradation of respectively EPAS1 and PARP1. Alternatively, it may also bind DNA/nucleosomes and have a more direct role in the regulation of transcription for instance enhancing basal transcription and steroid receptor-mediated transcriptional activation. Catalyzes ubiquitination of sumoylated PARP1 in response to PARP1 trapping to chromatin, leading to PARP1 removal from chromatin by VCP/p97. The chain is E3 ubiquitin-protein ligase RNF4 from Homo sapiens (Human).